The sequence spans 501 residues: Monocarboxylate transporter 1 (501 aa).

Residues 1–22 lie on the Cytoplasmic side of the membrane; that stretch reads MPPAVGGPVGYTPPDGGWGWAV. Residues 23 to 44 traverse the membrane as a helical segment; sequence VIGAFISIGFSYAFPKSITVFF. K38 serves as a coordination point for (S)-lactate. Topologically, residues 45–55 are extracellular; sequence KEIEGIFNATT. A helical transmembrane segment spans residues 56 to 80; it reads SEVSWISSIMLAVMYGGGPISSVLV. Topologically, residues 81–84 are cytoplasmic; sequence NKYG. A helical transmembrane segment spans residues 85 to 105; the sequence is SRPVMIVGGILSGSGLIAASF. Residues 106-109 lie on the Extracellular side of the membrane; sequence CNTV. A helical membrane pass occupies residues 110–132; the sequence is QELYFSVGVIGGLGLAFNLNPAL. Residues 133–146 are Cytoplasmic-facing; sequence TMIGKYFYKRRPLA. The helical transmembrane segment at 147-169 threads the bilayer; that stretch reads NGLAMAGSPVFLSTLAPLNQAFF. The Extracellular segment spans residues 170–174; that stretch reads MIYGW. A helical membrane pass occupies residues 175 to 194; the sequence is RGSFLILGGLLLNCCVAGAL. The Cytoplasmic portion of the chain corresponds to 195 to 261; sequence MRPIGPKPTT…FLDLSLFKHR (67 aa). Positions 201 to 236 are disordered; the sequence is KPTTAEKEKSKGSLQEAGKYETKKGASDANTDLIGG. S210, S213, and S227 each carry phosphoserine. T231 carries the phosphothreonine modification. A helical transmembrane segment spans residues 262–288; the sequence is GFLLYLSGNVLMFFGLFTPLVFLSNYG. Residues 289–295 are Extracellular-facing; the sequence is KSKHYSS. The chain crosses the membrane as a helical span at residues 296-317; it reads EKAAFLLSILAFVDMVARPSMG. Residue D309 coordinates H(+). R313 is a (S)-lactate binding site. Topologically, residues 318–328 are cytoplasmic; sequence LVANTKWVRPR. Residues 329–349 form a helical membrane-spanning segment; it reads VQYFFAASIIANGLCHLAAPL. At 350–353 the chain is on the extracellular side; sequence SSTY. Residues 354–375 traverse the membrane as a helical segment; it reads IELCIYAGFFGFAFGWLSSVLF. The Cytoplasmic segment spans residues 376–389; sequence ETLMDLVGPQRFSS. The helical transmembrane segment at 390-410 threads the bilayer; the sequence is AVGLVTIVECCPVLLGPPVLG. Residues 411-421 are Extracellular-facing; it reads RLNDIYGDYKY. A helical transmembrane segment spans residues 422-443; that stretch reads TYWACGIILIVAGIYLFIGMGI. Over 444–501 the chain is Cytoplasmic; it reads NYRLLEKEQKAEKQQKKESKDEETNVDVAEKPKEVIDAAESPEHKATEEDPKEAESPV. The disordered stretch occupies residues 454-501; that stretch reads AEKQQKKESKDEETNVDVAEKPKEVIDAAESPEHKATEEDPKEAESPV. A Phosphoserine modification is found at S462. T467 bears the Phosphothreonine mark. 2 positions are modified to phosphoserine: S484 and S499.

Belongs to the major facilitator superfamily. Monocarboxylate porter (TC 2.A.1.13) family. As to quaternary structure, interacts with BSG; interaction mediates SLC16A1 targeting to the plasma membrane. Interacts with EMB; interaction mediates SLC16A1 targeting to the plasma membrane.

Its subcellular location is the cell membrane. It is found in the basolateral cell membrane. The protein resides in the apical cell membrane. It carries out the reaction (S)-lactate(in) + H(+)(in) = (S)-lactate(out) + H(+)(out). It catalyses the reaction acetate(out) + H(+)(out) = acetate(in) + H(+)(in). The catalysed reaction is acetoacetate(out) + H(+)(out) = acetoacetate(in) + H(+)(in). The enzyme catalyses pyruvate(out) + H(+)(out) = pyruvate(in) + H(+)(in). It carries out the reaction (R)-3-hydroxybutanoate(out) + H(+)(out) = (R)-3-hydroxybutanoate(in) + H(+)(in). It catalyses the reaction 3-methyl-2-oxobutanoate(out) + H(+)(out) = 3-methyl-2-oxobutanoate(in) + H(+)(in). The catalysed reaction is 4-methyl-2-oxopentanoate(out) + H(+)(out) = 4-methyl-2-oxopentanoate(in) + H(+)(in). The enzyme catalyses succinate(in) + 2 H(+)(in) = succinate(out) + 2 H(+)(out). Bidirectional proton-coupled monocarboxylate transporter. Catalyzes the rapid transport across the plasma membrane of many monocarboxylates such as lactate, pyruvate, acetate and the ketone bodies acetoacetate and beta-hydroxybutyrate, and thus contributes to the maintenance of intracellular pH. The transport direction is determined by the proton motive force and the concentration gradient of the substrate monocarboxylate. MCT1 is a major lactate exporter. Plays a role in cellular responses to a high-fat diet by modulating the cellular levels of lactate and pyruvate that contribute to the regulation of central metabolic pathways and insulin secretion, with concomitant effects on plasma insulin levels and blood glucose homeostasis. Facilitates the protonated monocarboxylate form of succinate export, that its transient protonation upon muscle cell acidification in exercising muscle and ischemic heart. Functions via alternate outward- and inward-open conformation states. Protonation and deprotonation of 309-Asp is essential for the conformational transition. This Bos taurus (Bovine) protein is Monocarboxylate transporter 1 (SLC16A1).